The primary structure comprises 199 residues: Small ribosomal subunit protein uS4 (199 aa).

Positions 106-170 (RRLQTIVFRK…SPVANELHPI (65 aa)) constitute an S4 RNA-binding domain. The tract at residues 177 to 199 (PAQRSAEMKEGQGEASEEGETDE) is disordered.

It belongs to the universal ribosomal protein uS4 family. In terms of assembly, part of the 30S ribosomal subunit. Contacts protein S5. The interaction surface between S4 and S5 is involved in control of translational fidelity.

Functionally, one of the primary rRNA binding proteins, it binds directly to 16S rRNA where it nucleates assembly of the body of the 30S subunit. With S5 and S12 plays an important role in translational accuracy. In Thermoplasma acidophilum (strain ATCC 25905 / DSM 1728 / JCM 9062 / NBRC 15155 / AMRC-C165), this protein is Small ribosomal subunit protein uS4.